Consider the following 648-residue polypeptide: MTPLLELKDIRRSYPAGDEQVEVLKGISLDIYAGEMVAIVGASGSGKSTLMNILGCLDKATSGTYRVAGQDVATLDADALAQLRREHFGFIFQRYHLLSHLTAEQNVEVPAVYAGLERKQRLLRAQELLQRLGLEDRTEYYPAQLSGGQQQRVSIARALMNGGQVILADEPTGALDSHSGEEVMAILHQLRDRGHTVIIVTHDPQVAAQAERVIEIRDGEIVRNPPAVEKVNATGGTEPVVNTASGWRQFVSGFNEALTMAWRALAANKMRTLLTMLGIIIGIASVVSIVVVGDAAKQMVLADIRSIGTNTIDVYPGKDFGDDDPQYQQALKYDDLIAIQKQPWVASATPAVSQNLRLRYNNVDVAASANGVSGDYFNVYGMTFSEGNTFNQEQLNGRAQVVVLDSNTRRQLFPHKADVVGEVILVGNMPARVIGVAEEKQSMFGSSKVLRVWLPYSTMSGRVMGQSWLNSITVRVKEGFDSAEAEQQLTRLLSLRHGKKDFFTWNMDGVLKTVEKTTRTLQLFLTLVAVISLVVGGIGVMNIMLVSVTERTREIGIRMAVGARASDVLQQFLIEAVLVCLVGGALGITLSLLIAFTLQLFLPGWEIGFSPLALLLAFLCSTVTGILFGWLPARNAARLDPVDALARE.

The ABC transporter domain occupies 5 to 243; that stretch reads LELKDIRRSY…TGGTEPVVNT (239 aa). Residue 41–48 coordinates ATP; it reads GASGSGKS. The next 4 helical transmembrane spans lie at 273–293, 523–543, 576–596, and 611–631; these read LLTM…VVVG, LFLT…VMNI, AVLV…LIAF, and PLAL…FGWL.

This sequence belongs to the ABC transporter superfamily. Macrolide exporter (TC 3.A.1.122) family. As to quaternary structure, homodimer. Part of the tripartite efflux system MacAB-TolC, which is composed of an inner membrane transporter, MacB, a periplasmic membrane fusion protein, MacA, and an outer membrane component, TolC. The complex forms a large protein conduit and can translocate molecules across both the inner and outer membranes. Interacts with MacA.

Its subcellular location is the cell inner membrane. Functionally, part of the tripartite efflux system MacAB-TolC. MacB is a non-canonical ABC transporter that contains transmembrane domains (TMD), which form a pore in the inner membrane, and an ATP-binding domain (NBD), which is responsible for energy generation. Confers resistance against macrolides. The chain is Macrolide export ATP-binding/permease protein MacB from Escherichia coli (strain UTI89 / UPEC).